Here is a 410-residue protein sequence, read N- to C-terminus: Mating-type locus allele B5 protein (410 aa).

A variable domain between B alleles region spans residues 1 to 110 (MSSDPNFSLT…FNVVSPAVVC (110 aa)). The homeobox; TALE-type DNA-binding region spans 107–184 (AVVCRNLSED…NARRRSGWSH (78 aa)). Residues 111 to 410 (RNLSEDLPAY…PFLCLSVAFV (300 aa)) form a highly conserved between B alleles region. 3 disordered regions span residues 201 to 241 (VRAK…TPAD), 275 to 336 (NKKT…PELS), and 366 to 395 (ILQS…PDEV). Residues 206–222 (SSSNQSTPPSPTSEYPS) show a composition bias toward low complexity. Residues 276–308 (KKTPKPGMPRPVTTVTKRQPARKTKPAAKPKSR) carry the Nuclear localization signal motif. Positions 294–307 (QPARKTKPAAKPKS) are enriched in basic residues. Residues 312–336 (PRASTTPSIDSTLDSSKLESTPELS) are compositionally biased toward polar residues. A not essential for B5 function region spans residues 333 to 410 (PELSMCSTAD…PFLCLSVAFV (78 aa)). A compositionally biased stretch (basic residues) spans 375–388 (RGNRKVKALPKRAG).

It belongs to the TALE/M-ATYP homeobox family.

It localises to the nucleus. The B locus has at least 25 alleles, and any combination of two different B alleles yields a multimeric regulatory protein, that activates genes responsible for the pathogenicity and for the sexual development of the fungus within the corn plant. In Mycosarcoma maydis (Corn smut fungus), this protein is Mating-type locus allele B5 protein.